We begin with the raw amino-acid sequence, 420 residues long: Tyrosine--tRNA ligase (420 aa).

Residue Y33 coordinates L-tyrosine. The 'HIGH' region motif lies at 38-47; the sequence is PTADSLHIGH. The L-tyrosine site is built by Y168 and Q172. The 'KMSKS' region signature appears at 231 to 235; it reads KFGKT. An ATP-binding site is contributed by K234. The 67-residue stretch at 353–419 folds into the S4 RNA-binding domain; the sequence is MLLVDALIKV…GKKNYYLVKL (67 aa).

Belongs to the class-I aminoacyl-tRNA synthetase family. TyrS type 1 subfamily. As to quaternary structure, homodimer.

It localises to the cytoplasm. It carries out the reaction tRNA(Tyr) + L-tyrosine + ATP = L-tyrosyl-tRNA(Tyr) + AMP + diphosphate + H(+). Catalyzes the attachment of tyrosine to tRNA(Tyr) in a two-step reaction: tyrosine is first activated by ATP to form Tyr-AMP and then transferred to the acceptor end of tRNA(Tyr). This is Tyrosine--tRNA ligase from Desulfitobacterium hafniense (strain DSM 10664 / DCB-2).